A 445-amino-acid polypeptide reads, in one-letter code: Glutamate-1-semialdehyde 2,1-aminomutase (445 aa).

Residue Lys263 is modified to N6-(pyridoxal phosphate)lysine.

This sequence belongs to the class-III pyridoxal-phosphate-dependent aminotransferase family. HemL subfamily. It depends on pyridoxal 5'-phosphate as a cofactor.

The protein localises to the cytoplasm. It carries out the reaction (S)-4-amino-5-oxopentanoate = 5-aminolevulinate. The protein operates within porphyrin-containing compound metabolism; protoporphyrin-IX biosynthesis; 5-aminolevulinate from L-glutamyl-tRNA(Glu): step 2/2. The sequence is that of Glutamate-1-semialdehyde 2,1-aminomutase from Halorubrum lacusprofundi (strain ATCC 49239 / DSM 5036 / JCM 8891 / ACAM 34).